The sequence spans 62 residues: Photosystem II reaction center protein Z (62 aa).

2 helical membrane-spanning segments follow: residues 8 to 28 and 41 to 61; these read AVFALIATSSILLISVPVVFA and FSGTSLWIALVFLVGILNSLI.

Belongs to the PsbZ family. PSII is composed of 1 copy each of membrane proteins PsbA, PsbB, PsbC, PsbD, PsbE, PsbF, PsbH, PsbI, PsbJ, PsbK, PsbL, PsbM, PsbT, PsbY, PsbZ, Psb30/Ycf12, at least 3 peripheral proteins of the oxygen-evolving complex and a large number of cofactors. It forms dimeric complexes.

Its subcellular location is the plastid. It localises to the chloroplast thylakoid membrane. Its function is as follows. May control the interaction of photosystem II (PSII) cores with the light-harvesting antenna, regulates electron flow through the 2 photosystem reaction centers. PSII is a light-driven water plastoquinone oxidoreductase, using light energy to abstract electrons from H(2)O, generating a proton gradient subsequently used for ATP formation. This Lotus japonicus (Lotus corniculatus var. japonicus) protein is Photosystem II reaction center protein Z.